The primary structure comprises 318 residues: Retinol dehydrogenase 5 (318 aa).

The helical transmembrane segment at 1–23 (MWLPLLLGALLWAVLWLLRDRQS) threads the bilayer. At 24–288 (LPASDAFIFI…TRYSPGWDAK (265 aa)) the chain is on the lumenal side. Residue 32-56 (FITGCDSGFGRLLALQLDQKGFQVL) coordinates NADP(+). Substrate is bound at residue S163. Residue Y175 is the Proton acceptor of the active site. The chain crosses the membrane as a helical span at residues 289 to 309 (LLWLPASYLPARVVDAVLTWI). Topologically, residues 310 to 318 (LPRPAQSVS) are cytoplasmic.

Belongs to the short-chain dehydrogenases/reductases (SDR) family. In terms of assembly, homodimer. Expressed in eye, liver, kidney, brain, intestine, placenta, epididymus and submaxillary gland. In eye, strongly expressed in the retinal pigment epithelium, with lower expression levels detected in the inner segment of the photoreceptor cells and in the outer plexiform layer. In kidney, strong expression detected in the distal tubules and the transitional epithelium in the renal pelvis, with weaker expression detected in the epithelium of the outer stripe of the outer zone of the medulla. In liver, detected in hepatocytes in the centrilobular area. In lung, present in club cells in the epithelium of the bronchiole, in parenchyma and in cartilage surrounding the secondary bronchi. In skin, expressed in epidermis, hair follicles and mast cells in the dermis. Expressed in heart. Not detected in heart. Not detected in lung, spleen, skeletal muscle and testis.

It localises to the endoplasmic reticulum membrane. The catalysed reaction is 11-cis-retinol + NAD(+) = 11-cis-retinal + NADH + H(+). It carries out the reaction 9-cis-retinol + NAD(+) = 9-cis-retinal + NADH + H(+). It catalyses the reaction 13-cis-retinol + NAD(+) = 13-cis-retinal + NADH + H(+). The enzyme catalyses androsterone + NAD(+) = 5alpha-androstan-3,17-dione + NADH + H(+). The catalysed reaction is 5alpha-androstane-3alpha,17beta-diol + NAD(+) = 17beta-hydroxy-5alpha-androstan-3-one + NADH + H(+). It participates in cofactor metabolism; retinol metabolism. Its activity is regulated as follows. Inhibited by 9-cis-, 13-cis- and all-trans-retinoic acids, with the most potent inhibitor being 13-cis-retinoic acid. Weakly inhibited by oleic acid. In terms of biological role, catalyzes the oxidation of cis-isomers of retinol, including 11-cis-, 9-cis-, and 13-cis-retinol in an NAD-dependent manner. Has no activity towards all-trans retinal. Plays a significant role in 11-cis retinol oxidation in the retinal pigment epithelium cells (RPE). Also recognizes steroids (androsterone, androstanediol) as its substrates. This Mus musculus (Mouse) protein is Retinol dehydrogenase 5.